Consider the following 449-residue polypeptide: tRNA-2-methylthio-N(6)-dimethylallyladenosine synthase (449 aa).

The MTTase N-terminal domain occupies Arg4–Glu119. Positions 13, 48, 82, 158, 162, and 165 each coordinate [4Fe-4S] cluster. In terms of domain architecture, Radical SAM core spans Gly144–Arg375. The region spanning Gln378–Gly446 is the TRAM domain.

This sequence belongs to the methylthiotransferase family. MiaB subfamily. As to quaternary structure, monomer. The cofactor is [4Fe-4S] cluster.

Its subcellular location is the cytoplasm. The catalysed reaction is N(6)-dimethylallyladenosine(37) in tRNA + (sulfur carrier)-SH + AH2 + 2 S-adenosyl-L-methionine = 2-methylsulfanyl-N(6)-dimethylallyladenosine(37) in tRNA + (sulfur carrier)-H + 5'-deoxyadenosine + L-methionine + A + S-adenosyl-L-homocysteine + 2 H(+). Functionally, catalyzes the methylthiolation of N6-(dimethylallyl)adenosine (i(6)A), leading to the formation of 2-methylthio-N6-(dimethylallyl)adenosine (ms(2)i(6)A) at position 37 in tRNAs that read codons beginning with uridine. The sequence is that of tRNA-2-methylthio-N(6)-dimethylallyladenosine synthase from Nitratidesulfovibrio vulgaris (strain ATCC 29579 / DSM 644 / CCUG 34227 / NCIMB 8303 / VKM B-1760 / Hildenborough) (Desulfovibrio vulgaris).